Consider the following 272-residue polypeptide: Methyl-CpG-binding domain-containing protein 2 (272 aa).

The segment covering 1–15 (MSMSQSRAVQRSSSP) has biased composition (polar residues). The interval 1 to 24 (MSMSQSRAVQRSSSPNEDRGENQL) is disordered. The CW-type zinc-finger motif lies at 53 to 112 (CPSIGAFTVQCASCFKWRLMPSMQKYEEIREQLLENPFFCDTAREWKPDISCDVPADIYQ). The MBD-associated domain (MAD) signature appears at 62–104 (QCASCFKWRLMPSMQKYEEIREQLLENPFFCDTAREWKPDISC). C63, C66, C92, and C104 together coordinate Zn(2+). The MBD domain occupies 118 to 192 (WAIDKPNISR…SQFSFQIPKP (75 aa)). Over residues 236 to 250 (LGTPTESGLNNSHYQ) the composition is skewed to polar residues. The tract at residues 236 to 272 (LGTPTESGLNNSHYQPSKKKKTSTLSIFGSNDELADR) is disordered.

Interacts (via MBD domain) with DDM1. As to expression, expressed in buds, flowers, stems, siliques and mature seeds.

It is found in the nucleus. In terms of biological role, probable transcriptional regulator. This chain is Methyl-CpG-binding domain-containing protein 2 (MBD2), found in Arabidopsis thaliana (Mouse-ear cress).